Reading from the N-terminus, the 329-residue chain is Porphobilinogen deaminase (329 aa).

Cys253 is subject to S-(dipyrrolylmethanemethyl)cysteine.

The protein belongs to the HMBS family. In terms of assembly, monomer. The cofactor is dipyrromethane.

The enzyme catalyses 4 porphobilinogen + H2O = hydroxymethylbilane + 4 NH4(+). Tetrapolymerization of the monopyrrole PBG into the hydroxymethylbilane pre-uroporphyrinogen in several discrete steps. The sequence is that of Porphobilinogen deaminase from Leifsonia xyli subsp. xyli (strain CTCB07).